The sequence spans 573 residues: O-fucosyltransferase 20 (573 aa).

At 1–60 the chain is on the cytoplasmic side; sequence MALSKNSNSNSFNKKKVSYISVPSQIINSLSSSSLQSLLVSPKKSSRSTNRFSFSYRNPR. Residues 61–81 traverse the membrane as a helical; Signal-anchor for type II membrane protein segment; that stretch reads IWFFTLFLVSLFGMLKLGFNV. Topologically, residues 82 to 573 are lumenal; the sequence is DPISLPFSRY…RQQQEQQSDA (492 aa). Asn138 is a glycosylation site (N-linked (GlcNAc...) asparagine). 344–346 contributes to the substrate binding site; that stretch reads HLR. N-linked (GlcNAc...) asparagine glycosylation is found at Asn385 and Asn517. The span at 547–556 shows a compositional bias: basic and acidic residues; sequence AGKDVTKHPV. Residues 547 to 573 form a disordered region; it reads AGKDVTKHPVPECMCSDRQQQEQQSDA. Residues 563–573 are compositionally biased toward polar residues; it reads DRQQQEQQSDA.

Belongs to the glycosyltransferase GT106 family. As to quaternary structure, interacts with RACK1A. In terms of tissue distribution, highly expressed in shoot apical meristem (SAM) and in young vegetative tissues.

The protein resides in the golgi apparatus membrane. The protein operates within glycan metabolism. Its function is as follows. May play a role in the biosynthesis of matrix polysaccharides and contribute to the biomechanics and development of the plant cell wall. The chain is O-fucosyltransferase 20 from Arabidopsis thaliana (Mouse-ear cress).